The sequence spans 33 residues: Protein YtiC (33 aa).

A helical membrane pass occupies residues 10–29 (FDMLSIYIIYKLIVSNNTWL).

The protein localises to the cell inner membrane. The protein is Protein YtiC of Escherichia coli (strain K12).